Here is a 1161-residue protein sequence, read N- to C-terminus: Voltage-gated inwardly rectifying potassium channel KCNH2 (1161 aa).

Residues 1–405 (MPVRRGHVAP…RIHRWTILHY (405 aa)) lie on the Cytoplasmic side of the membrane. Positions 17–88 (TIIRKFEGQS…AAQIAQALLG (72 aa)) constitute a PAS domain. The 53-residue stretch at 92–144 (RKVEIAFYRKDGSCFLCLVDVVPVKNEDGAVIMFILNFEVVMEKDMVGSPARD) folds into the PAC domain. The segment at 233-286 (ALVGSCSPPPPVSAPGPHPSLRAHSLNPDASGSSCSLARTRSRESCASVRRASS) is disordered. Residues Ser239 and Ser245 each carry the phosphoserine modification. Pro residues predominate over residues 239 to 250 (SPPPPVSAPGPH). The span at 260-271 (PDASGSSCSLAR) shows a compositional bias: polar residues. Residues Ser285, Ser286, Ser322, and Ser353 each carry the phosphoserine modification. Residues 406 to 426 (SPFKAVWDWLILLLVIYTAVF) traverse the membrane as a helical segment. Topologically, residues 427 to 452 (TPYSAAFLLKETEEGPPAPECGYACQ) are extracellular. Residues 453–473 (PLAVVDLIVDIMFIVDILINF) form a helical membrane-spanning segment. Topologically, residues 474–497 (RTTYVNANEEVVSHPGRIAVHYFK) are cytoplasmic. The chain crosses the membrane as a helical span at residues 498–518 (GWFLIDMVAAIPFDLLIFGSG). The Extracellular portion of the chain corresponds to 519 to 522 (SEEL). The helical; Voltage-sensor transmembrane segment at 523–543 (IGLLKTARLLRLVRVARKLDR) threads the bilayer. The Cytoplasmic portion of the chain corresponds to 544–549 (YSEYGA). The helical transmembrane segment at 550–570 (AVLLLLMCTFALIAHWLACIW) threads the bilayer. The Extracellular segment spans residues 571–613 (YAIGNMEQPHMDSRIGWLHNLGDQMGKPYNSSGLGGPSIKDKY). N-linked (GlcNAc...) asparagine glycosylation occurs at Asn600. Residues 614–634 (VTGLYFTFSSLTSVGFGNVSP) constitute an intramembrane region (pore-forming). Residues 626-631 (SVGFGN) carry the Selectivity filter motif. Topologically, residues 635–640 (NTNSEK) are extracellular. The chain crosses the membrane as a helical span at residues 641-661 (IFSICVMLIGSLMYASIFGNV). Topologically, residues 662 to 1161 (SAIIQRLYSG…LHRHGSDPGS (500 aa)) are cytoplasmic. A cNMP-binding domain region spans residues 744 to 844 (PFRGATKDCL…IHRDDLLEVL (101 aa)). Positions 872-985 (GSPGSTEWEG…TEDCEKSSDT (114 aa)) are disordered. Phosphoserine occurs at positions 873 and 876. Residues 885–894 (RQRKRKLSFR) are compositionally biased toward basic residues. Residues 930–941 (GESPSSGPSSPE) show a composition bias toward low complexity. The span at 962 to 972 (SPRPPGEPPGG) shows a compositional bias: pro residues. Omega-N-methylarginine is present on Arg1016. Residues 1037–1064 (RGDVESRLDALQRQLNRLETRLSADMAT) are a coiled coil. Residues 1121 to 1161 (ELPPGAPELPQEGPTRRLSLPGQLGALTSQPLHRHGSDPGS) form a disordered region. At Ser1139 the chain carries Phosphoserine.

Belongs to the potassium channel family. H (Eag) (TC 1.A.1.20) subfamily. Kv11.1/KCNH2 sub-subfamily. In terms of assembly, the potassium channel is probably composed of a homo- or heterotetrameric complex of pore-forming alpha subunits that can associate with modulating beta subunits. Interacts with DNAJB12 and DNAJB14; chaperones DNAJB12 and DNAJB14 promote tetramerization. Heteromultimer with KCNH6/ERG2 and KCNH7/ERG3. Interacts with ALG10B. Forms a stable complex with KCNE1 or KCNE2, and that this heteromultimerization regulates Inward rectifier potassium channel activity. Interacts with CANX. The core-glycosylated, but not the fully glycosylated form interacts with RNF207. Interacts with NDFIP1 and NDFIP2; this interaction decreases the cell membrane expression by targeting KCNH2, through interaction with NEDD4L, for the degradation through the multivesicular bodies (MVBs)-lysosomal pathway. In terms of processing, phosphorylated on serine and threonine residues. Phosphorylation by PKA inhibits ion conduction. In terms of tissue distribution, detected in heart, both in atrium and in left ventricle.

Its subcellular location is the cell membrane. It carries out the reaction K(+)(in) = K(+)(out). Functionally, pore-forming (alpha) subunit of voltage-gated inwardly rectifying potassium channel. Characterized by unusual gating kinetics by producing relatively small outward currents during membrane depolarization and large inward currents during subsequent repolarization which reflect a rapid inactivation during depolarization and quick recovery from inactivation but slow deactivation (closing) during repolarization. Channel properties are modulated by cAMP and subunit assembly. Forms a stable complex with KCNE1 or KCNE2, and that this heteromultimerization regulates inward rectifier potassium channel activity. The polypeptide is Voltage-gated inwardly rectifying potassium channel KCNH2 (Oryctolagus cuniculus (Rabbit)).